The following is a 235-amino-acid chain: FsC-acetyl coenzyme A-N(2)-transacetylase (235 aa).

Residues 14 to 190 (LELVPLGHEH…RYSITREEWL (177 aa)) enclose the N-acetyltransferase domain. CoA contacts are provided by residues 106-108 (FRV), glycine 114, asparagine 146, and 151-153 (AVM).

It functions in the pathway siderophore biosynthesis. Its function is as follows. FsC-acetyl coenzyme A-N(2)-transacetylase; part of the siderophore biosynthetic pathway. Aspergillus fumigatus produces 4 types of siderophores, low-molecular-mass iron chelators, including excreted fusarinine C (FsC) and triacetylfusarinine C (TAFC) for iron uptake and intacellular ferricrocin (FC) for hyphal and hydroxyferricrocin (HFC) for conidial iron distribution and storage. TAFC consists of 3 N(2)-acetyl-N(5)-anhydromevalonyl-N(5)-hydroxyornithine residues cyclically linked by ester bonds; FC is a cyclic hexapeptide with the structure Gly-Ser-Gly-(N(5)-acetyl-N(5)-hydroxyornithine)x3. The biosynthesis of all four siderophores depends on the hydroxylation of ornithine, catalyzed by the monooxygenase sidA. Subsequently, the pathways for biosynthesis of extra- and intracellular siderophores split. For biosynthesis of extracellular siderophores, the transacylase sidF transfers anhydromevalonyl to N(5)-hydroxyornithine. The required anhydromevalonyl-CoA moiety is derived from mevalonate by CoA ligation and dehydration catalyzed by sidI and sidH respectively. The acetylation of N(5)-hydroxyornithine for FC biosynthesis involves the constitutively expressed sidL. FC is hydroxylated to HFC by an as yet uncharacterized enzyme during conidiation. Assembly of fusarinine C (FsC) and FC is catalyzed by two different nonribosomal peptide synthetases (NRPS), sidD and sidC respectively. Subsequently, sidG catalyzes N2-acetylation of FsC for forming TAFC. Both extra- and intracellular siderophores are crucial for growth during iron limitation and virulence. This is FsC-acetyl coenzyme A-N(2)-transacetylase from Aspergillus fumigatus (strain ATCC MYA-4609 / CBS 101355 / FGSC A1100 / Af293) (Neosartorya fumigata).